Reading from the N-terminus, the 208-residue chain is Glycerol-3-phosphate acyltransferase 1 (208 aa).

5 helical membrane passes run 52 to 72 (VVLM…YLLI), 77 to 97 (WVIL…WLDF), 112 to 132 (FLLP…LVFI), 140 to 160 (IALA…YGSH), and 161 to 181 (SEFA…KFVL).

It belongs to the PlsY family. As to quaternary structure, probably interacts with PlsX.

It localises to the cell membrane. The catalysed reaction is an acyl phosphate + sn-glycerol 3-phosphate = a 1-acyl-sn-glycero-3-phosphate + phosphate. Its pathway is lipid metabolism; phospholipid metabolism. Its function is as follows. Catalyzes the transfer of an acyl group from acyl-phosphate (acyl-PO(4)) to glycerol-3-phosphate (G3P) to form lysophosphatidic acid (LPA). This enzyme utilizes acyl-phosphate as fatty acyl donor, but not acyl-CoA or acyl-ACP. The protein is Glycerol-3-phosphate acyltransferase 1 of Dehalococcoides mccartyi (strain ATCC BAA-2266 / KCTC 15142 / 195) (Dehalococcoides ethenogenes (strain 195)).